The primary structure comprises 379 residues: RIB43A-like with coiled-coils protein 1 (379 aa).

Coiled coils occupy residues 43–111 (EALN…RCEL) and 285–337 (IRKV…EFRR).

This sequence belongs to the RIB43A family. In terms of assembly, microtubule inner protein component of sperm flagellar doublet microtubules.

Its subcellular location is the cytoplasm. It localises to the cytoskeleton. It is found in the flagellum axoneme. This chain is RIB43A-like with coiled-coils protein 1 (RIBC1), found in Bos taurus (Bovine).